A 147-amino-acid chain; its full sequence is Hemoglobin subunit epsilon (147 aa).

The Globin domain maps to 3–147 (HFTAEEKSTI…VATALAHKYH (145 aa)). Phosphoserine is present on residues Ser14 and Ser51. Heme b-binding residues include His64 and His93.

It belongs to the globin family. Heterotetramer of two alpha chains and two epsilon chains in early embryonic hemoglobin Gower-2; two zeta chains and two epsilon chains in early embryonic hemoglobin Gower-1. In terms of tissue distribution, red blood cells.

The epsilon chain is a beta-type chain of early mammalian embryonic hemoglobin. The protein is Hemoglobin subunit epsilon (HBE1) of Microcebus murinus (Gray mouse lemur).